The primary structure comprises 158 residues: GTP-dependent dephospho-CoA kinase (158 aa).

Residues Asp-35, Val-36, Asp-54, Lys-56, Glu-109, and Asp-132 each coordinate GTP.

The protein belongs to the GTP-dependent DPCK family.

It catalyses the reaction 3'-dephospho-CoA + GTP = GDP + CoA + H(+). It participates in cofactor biosynthesis; coenzyme A biosynthesis. Catalyzes the GTP-dependent phosphorylation of the 3'-hydroxyl group of dephosphocoenzyme A to form coenzyme A (CoA). The protein is GTP-dependent dephospho-CoA kinase of Methanococcus vannielii (strain ATCC 35089 / DSM 1224 / JCM 13029 / OCM 148 / SB).